Here is a 274-residue protein sequence, read N- to C-terminus: Large ribosomal subunit protein uL2 (274 aa).

Positions 223 to 257 are disordered; that stretch reads VAMNPVDHPHGGGEGRTSGGRHPVTPWGIPTKGYK.

Belongs to the universal ribosomal protein uL2 family. Part of the 50S ribosomal subunit. Forms a bridge to the 30S subunit in the 70S ribosome.

Its function is as follows. One of the primary rRNA binding proteins. Required for association of the 30S and 50S subunits to form the 70S ribosome, for tRNA binding and peptide bond formation. It has been suggested to have peptidyltransferase activity; this is somewhat controversial. Makes several contacts with the 16S rRNA in the 70S ribosome. In Geobacter sulfurreducens (strain ATCC 51573 / DSM 12127 / PCA), this protein is Large ribosomal subunit protein uL2.